A 461-amino-acid polypeptide reads, in one-letter code: Bifunctional protein HldE (461 aa).

Positions 1-312 are ribokinase; sequence MLEFLSQQKP…IKSFNRVDFE (312 aa). An ATP-binding site is contributed by 191 to 194; the sequence is NKKE. Asp-259 is an active-site residue. Positions 334 to 461 are cytidylyltransferase; it reads FTNGCFDIVH…KIIEKIKDKK (128 aa).

This sequence in the N-terminal section; belongs to the carbohydrate kinase PfkB family. The protein in the C-terminal section; belongs to the cytidylyltransferase family. As to quaternary structure, homodimer.

The enzyme catalyses D-glycero-beta-D-manno-heptose 7-phosphate + ATP = D-glycero-beta-D-manno-heptose 1,7-bisphosphate + ADP + H(+). It carries out the reaction D-glycero-beta-D-manno-heptose 1-phosphate + ATP + H(+) = ADP-D-glycero-beta-D-manno-heptose + diphosphate. It participates in nucleotide-sugar biosynthesis; ADP-L-glycero-beta-D-manno-heptose biosynthesis; ADP-L-glycero-beta-D-manno-heptose from D-glycero-beta-D-manno-heptose 7-phosphate: step 1/4. It functions in the pathway nucleotide-sugar biosynthesis; ADP-L-glycero-beta-D-manno-heptose biosynthesis; ADP-L-glycero-beta-D-manno-heptose from D-glycero-beta-D-manno-heptose 7-phosphate: step 3/4. In terms of biological role, catalyzes the phosphorylation of D-glycero-D-manno-heptose 7-phosphate at the C-1 position to selectively form D-glycero-beta-D-manno-heptose-1,7-bisphosphate. Catalyzes the ADP transfer from ATP to D-glycero-beta-D-manno-heptose 1-phosphate, yielding ADP-D-glycero-beta-D-manno-heptose. The sequence is that of Bifunctional protein HldE from Campylobacter jejuni subsp. doylei (strain ATCC BAA-1458 / RM4099 / 269.97).